A 430-amino-acid polypeptide reads, in one-letter code: Aspartate aminotransferase, mitochondrial (430 aa).

A mitochondrion-targeting transit peptide spans 1 to 29; the sequence is MALLHSGRVLSGIAAAFHPGLAAAASARA. Thr-48 is subject to Phosphothreonine. The residue at position 59 (Lys-59) is an N6-acetyllysine. Residue Gly-65 coordinates substrate. Position 73 is an N6-acetyllysine; alternate (Lys-73). Position 73 is an N6-succinyllysine; alternate (Lys-73). N6-acetyllysine is present on Lys-82. Lys-90 bears the N6-acetyllysine; alternate mark. Lys-90 carries the post-translational modification N6-succinyllysine; alternate. Position 96 is a 3'-nitrotyrosine; alternate (Tyr-96). The residue at position 96 (Tyr-96) is a Phosphotyrosine; alternate. An N6-acetyllysine; alternate mark is found at Lys-107 and Lys-122. An N6-succinyllysine; alternate mark is found at Lys-107 and Lys-122. Ser-143 is modified (phosphoserine). The residue at position 159 (Lys-159) is an N6-acetyllysine; alternate. Residue Lys-159 is modified to N6-succinyllysine; alternate. Trp-162 serves as a coordination point for substrate. At Lys-185 the chain carries N6-acetyllysine; alternate. Residue Lys-185 is modified to N6-succinyllysine; alternate. Asn-215 contacts substrate. Lys-227 carries the N6-succinyllysine modification. Lys-234 is subject to N6-acetyllysine. N6-acetyllysine; alternate occurs at positions 279 and 296. Lys-279 bears the N6-(pyridoxal phosphate)lysine; alternate mark. Lys-296 is modified (N6-succinyllysine; alternate). At Lys-302 the chain carries N6-acetyllysine. At Lys-309 the chain carries N6-acetyllysine; alternate. At Lys-309 the chain carries N6-succinyllysine; alternate. Arg-313 is modified (asymmetric dimethylarginine). Position 333 is a phosphothreonine (Thr-333). Lys-338 is modified (N6-acetyllysine; alternate). N6-succinyllysine; alternate is present on Lys-338. Lys-345 bears the N6-acetyllysine mark. Position 363 is an N6-acetyllysine; alternate (Lys-363). N6-succinyllysine; alternate is present on Lys-363. An N6-acetyllysine mark is found at Lys-364 and Lys-387. N6-acetyllysine; alternate is present on residues Lys-396 and Lys-404. N6-succinyllysine; alternate occurs at positions 396 and 404. Position 407 (Arg-407) interacts with substrate.

Belongs to the class-I pyridoxal-phosphate-dependent aminotransferase family. As to quaternary structure, homodimer. Requires pyridoxal 5'-phosphate as cofactor.

The protein resides in the mitochondrion matrix. It is found in the cell membrane. The catalysed reaction is L-aspartate + 2-oxoglutarate = oxaloacetate + L-glutamate. The enzyme catalyses L-kynurenine + 2-oxoglutarate = kynurenate + L-glutamate + H2O. In terms of biological role, catalyzes the irreversible transamination of the L-tryptophan metabolite L-kynurenine to form kynurenic acid (KA). As a member of the malate-aspartate shuttle, it has a key role in the intracellular NAD(H) redox balance. Is important for metabolite exchange between mitochondria and cytosol, and for amino acid metabolism. Facilitates cellular uptake of long-chain free fatty acids. This chain is Aspartate aminotransferase, mitochondrial (GOT2), found in Macaca fascicularis (Crab-eating macaque).